A 320-amino-acid chain; its full sequence is Transcription termination/antitermination protein NusG (320 aa).

This sequence belongs to the NusG family.

Its function is as follows. Participates in transcription elongation, termination and antitermination. In Mycoplasma pneumoniae (strain ATCC 29342 / M129 / Subtype 1) (Mycoplasmoides pneumoniae), this protein is Transcription termination/antitermination protein NusG.